The chain runs to 333 residues: Olfactory receptor 1078 (333 aa).

The Extracellular portion of the chain corresponds to 1–25 (MDSSNRTRVSEFLLLGFVENKDLQP). N-linked (GlcNAc...) asparagine glycosylation is present at N5. A helical transmembrane segment spans residues 26-50 (LIYGLFLSMYLVTVIGNISIIVAII). The Cytoplasmic segment spans residues 51–57 (SDPCLHT). The chain crosses the membrane as a helical span at residues 58–79 (PMYFFLSNLSFVDICFISTTVP). Residues 80–100 (KMLVNIQTQNNVITYAGCITQ) are Extracellular-facing. The cysteines at positions 97 and 189 are disulfide-linked. Residues 101 to 120 (IYFFLLFVELDNFLLTIMAY) form a helical membrane-spanning segment. Residues 121–139 (DRYVAICHPMHYTVIMNYK) are Cytoplasmic-facing. Residues 140–158 (LCGFLVLVSWIVSVLHALF) form a helical membrane-spanning segment. Over 159 to 196 (QSLMMLALPFCTHLEIPHYFCEPNQVIQLTCSDAFLND) the chain is Extracellular. Residues 197–219 (LVIYFTLVLLATVPLAGIFYSYF) form a helical membrane-spanning segment. Residues 220 to 236 (KIVSSICAISSVHGKYK) are Cytoplasmic-facing. Residues 237–260 (AFSTCASHLSVVSLFYCTGLGVYL) traverse the membrane as a helical segment. Residues 261 to 272 (SSAANNSSQASA) lie on the Extracellular side of the membrane. Residues 273-292 (TASVMYTVVTPMVNPFIYSL) form a helical membrane-spanning segment. Over 293-333 (RNKDVKSVLKKTLCEEVIRSPPSLLHFFLVLCHLPCFIFCY) the chain is Cytoplasmic.

Belongs to the G-protein coupled receptor 1 family. In terms of tissue distribution, olfactory epithelium.

It localises to the cell membrane. Odorant receptor. In Rattus norvegicus (Rat), this protein is Olfactory receptor 1078 (Olr1078).